The chain runs to 232 residues: Ion-translocating oxidoreductase complex subunit E (232 aa).

A run of 5 helical transmembrane segments spans residues 39-59, 69-89, 92-112, 125-145, and 182-202; these read LGLG…ISSL, IPIY…LINA, FGLY…CIVV, ALSA…MFVL, and PFLL…MLAV.

This sequence belongs to the NqrDE/RnfAE family. As to quaternary structure, the complex is composed of six subunits: RnfA, RnfB, RnfC, RnfD, RnfE and RnfG.

It localises to the cell inner membrane. Functionally, part of a membrane-bound complex that couples electron transfer with translocation of ions across the membrane. This Klebsiella pneumoniae (strain 342) protein is Ion-translocating oxidoreductase complex subunit E.